The primary structure comprises 664 residues: DNA ligase (664 aa).

NAD(+)-binding positions include 31–35 (DYEFD), 80–81 (SL), and E110. K112 functions as the N6-AMP-lysine intermediate in the catalytic mechanism. Residues R133 and E169 each coordinate NAD(+). One can recognise a BRCT 1 domain in the interval 237-257 (LEKARKWGFKVPAESELKDSI). Residues K284 and K308 each coordinate NAD(+). 4 residues coordinate Zn(2+): C402, C405, C420, and C426. The BRCT 2 domain occupies 586–664 (NQTNILEGNT…SEEDFLKMLE (79 aa)).

The protein belongs to the NAD-dependent DNA ligase family. LigA subfamily. Mg(2+) serves as cofactor. Requires Mn(2+) as cofactor.

The catalysed reaction is NAD(+) + (deoxyribonucleotide)n-3'-hydroxyl + 5'-phospho-(deoxyribonucleotide)m = (deoxyribonucleotide)n+m + AMP + beta-nicotinamide D-nucleotide.. Its function is as follows. DNA ligase that catalyzes the formation of phosphodiester linkages between 5'-phosphoryl and 3'-hydroxyl groups in double-stranded DNA using NAD as a coenzyme and as the energy source for the reaction. It is essential for DNA replication and repair of damaged DNA. This is DNA ligase from Christiangramia forsetii (strain DSM 17595 / CGMCC 1.15422 / KT0803) (Gramella forsetii).